Here is a 302-residue protein sequence, read N- to C-terminus: Acetyl-coenzyme A carboxylase carboxyl transferase subunit beta (302 aa).

One can recognise a CoA carboxyltransferase N-terminal domain in the interval 25-294 (VWTKCDSCGQ…PHFDEAAPVS (270 aa)). Zn(2+) is bound by residues C29, C32, C48, and C51. A C4-type zinc finger spans residues 29–51 (CDSCGQVLYRAELERNLEVCPKC). Residues 281-302 (NQPQPHFDEAAPVSEQENQADA) form a disordered region.

This sequence belongs to the AccD/PCCB family. In terms of assembly, acetyl-CoA carboxylase is a heterohexamer composed of biotin carboxyl carrier protein (AccB), biotin carboxylase (AccC) and two subunits each of ACCase subunit alpha (AccA) and ACCase subunit beta (AccD). Zn(2+) is required as a cofactor.

It localises to the cytoplasm. The enzyme catalyses N(6)-carboxybiotinyl-L-lysyl-[protein] + acetyl-CoA = N(6)-biotinyl-L-lysyl-[protein] + malonyl-CoA. It functions in the pathway lipid metabolism; malonyl-CoA biosynthesis; malonyl-CoA from acetyl-CoA: step 1/1. Functionally, component of the acetyl coenzyme A carboxylase (ACC) complex. Biotin carboxylase (BC) catalyzes the carboxylation of biotin on its carrier protein (BCCP) and then the CO(2) group is transferred by the transcarboxylase to acetyl-CoA to form malonyl-CoA. The sequence is that of Acetyl-coenzyme A carboxylase carboxyl transferase subunit beta from Serratia proteamaculans (strain 568).